A 381-amino-acid polypeptide reads, in one-letter code: Secretion apparatus protein BsaZ (381 aa).

4 helical membrane passes run 28-48 (IVALVVIATGALSAPALVDLT), 80-100 (IAAPFVLLCAAVGALPSLVQS), 134-154 (AVKALLYVGVFAITVRVFADL), and 175-195 (IVLTVRLVLLFLLCALPVLIV). Positions 343–381 (NRGGPPREMPPEATHAPDAHGGDAASGGATSAQAGERNA) are disordered. Over residues 364–381 (GDAASGGATSAQAGERNA) the composition is skewed to low complexity.

The protein belongs to the type III secretion exporter family.

It localises to the cell membrane. Functionally, part of the bsa type III secretion system, is involved in the intracellular replication of invading bacteria inside the host cell. Probably necessary for the lysis of the vacuole membrane and escape into the host cell cytoplasm. In Burkholderia thailandensis (strain ATCC 700388 / DSM 13276 / CCUG 48851 / CIP 106301 / E264), this protein is Secretion apparatus protein BsaZ (bsaZ).